Consider the following 401-residue polypeptide: Acetate kinase (401 aa).

Asn7 lines the Mg(2+) pocket. Lys14 is a binding site for ATP. Residue Arg91 coordinates substrate. Asp148 (proton donor/acceptor) is an active-site residue. ATP contacts are provided by residues 208–212, 283–285, and 332–336; these read HLGNG, DFR, and GVGEN. A Mg(2+)-binding site is contributed by Glu385.

It belongs to the acetokinase family. In terms of assembly, homodimer. Mg(2+) serves as cofactor. Requires Mn(2+) as cofactor.

It is found in the cytoplasm. The catalysed reaction is acetate + ATP = acetyl phosphate + ADP. It functions in the pathway metabolic intermediate biosynthesis; acetyl-CoA biosynthesis; acetyl-CoA from acetate: step 1/2. In terms of biological role, catalyzes the formation of acetyl phosphate from acetate and ATP. Can also catalyze the reverse reaction. The protein is Acetate kinase of Thermoanaerobacter pseudethanolicus (strain ATCC 33223 / 39E) (Clostridium thermohydrosulfuricum).